The primary structure comprises 156 residues: 6,7-dimethyl-8-ribityllumazine synthase (156 aa).

5-amino-6-(D-ribitylamino)uracil contacts are provided by residues Phe-23, 57–59, and 81–83; these read AFE and AVI. A (2S)-2-hydroxy-3-oxobutyl phosphate-binding site is contributed by 86-87; it reads ST. His-89 (proton donor) is an active-site residue. Phe-114 is a 5-amino-6-(D-ribitylamino)uracil binding site. Arg-128 contributes to the (2S)-2-hydroxy-3-oxobutyl phosphate binding site.

It belongs to the DMRL synthase family.

The catalysed reaction is (2S)-2-hydroxy-3-oxobutyl phosphate + 5-amino-6-(D-ribitylamino)uracil = 6,7-dimethyl-8-(1-D-ribityl)lumazine + phosphate + 2 H2O + H(+). It functions in the pathway cofactor biosynthesis; riboflavin biosynthesis; riboflavin from 2-hydroxy-3-oxobutyl phosphate and 5-amino-6-(D-ribitylamino)uracil: step 1/2. Its function is as follows. Catalyzes the formation of 6,7-dimethyl-8-ribityllumazine by condensation of 5-amino-6-(D-ribitylamino)uracil with 3,4-dihydroxy-2-butanone 4-phosphate. This is the penultimate step in the biosynthesis of riboflavin. This chain is 6,7-dimethyl-8-ribityllumazine synthase, found in Sulfurospirillum multivorans (Dehalospirillum multivorans).